Here is a 350-residue protein sequence, read N- to C-terminus: RNA 3'-terminal phosphate cyclase (350 aa).

ATP-binding positions include Q100 and 290-294; that span reads FLGDQ. The active-site Tele-AMP-histidine intermediate is H314.

The protein belongs to the RNA 3'-terminal cyclase family. Type 1 subfamily.

The protein localises to the cytoplasm. The catalysed reaction is a 3'-end 3'-phospho-ribonucleotide-RNA + ATP = a 3'-end 2',3'-cyclophospho-ribonucleotide-RNA + AMP + diphosphate. Functionally, catalyzes the conversion of 3'-phosphate to a 2',3'-cyclic phosphodiester at the end of RNA. The mechanism of action of the enzyme occurs in 3 steps: (A) adenylation of the enzyme by ATP; (B) transfer of adenylate to an RNA-N3'P to produce RNA-N3'PP5'A; (C) and attack of the adjacent 2'-hydroxyl on the 3'-phosphorus in the diester linkage to produce the cyclic end product. The biological role of this enzyme is unknown but it is likely to function in some aspects of cellular RNA processing. This Thermococcus sibiricus (strain DSM 12597 / MM 739) protein is RNA 3'-terminal phosphate cyclase.